The sequence spans 325 residues: ATPase GET3 (325 aa).

An ATP-binding site is contributed by 34–41; it reads KGGVGKTT. Residue D63 is part of the active site. The ATP site is built by E243 and N270. Zn(2+) contacts are provided by C281 and C284.

Belongs to the arsA ATPase family. In terms of assembly, homodimer.

It is found in the cytoplasm. The protein resides in the endoplasmic reticulum. Functionally, ATPase required for the post-translational delivery of tail-anchored (TA) proteins to the endoplasmic reticulum. Recognizes and selectively binds the transmembrane domain of TA proteins in the cytosol. This complex then targets to the endoplasmic reticulum by membrane-bound receptors, where the tail-anchored protein is released for insertion. This process is regulated by ATP binding and hydrolysis. ATP binding drives the homodimer towards the closed dimer state, facilitating recognition of newly synthesized TA membrane proteins. ATP hydrolysis is required for insertion. Subsequently, the homodimer reverts towards the open dimer state, lowering its affinity for the membrane-bound receptor, and returning it to the cytosol to initiate a new round of targeting. This is ATPase GET3 from Coccidioides posadasii (strain C735) (Valley fever fungus).